Here is a 487-residue protein sequence, read N- to C-terminus: PPE family protein PPE10 (487 aa).

Over residues 398–424 (APVGGLDSGNPNPGSGSAAAGSGANPG) the composition is skewed to low complexity. The disordered stretch occupies residues 398–487 (APVGGLDSGN…PRIGQPVGSE (90 aa)). The span at 428 to 446 (PGTSYPSFVNSGSNDSGLR) shows a compositional bias: polar residues.

It belongs to the mycobacterial PPE family.

It is found in the secreted. In terms of biological role, plays a major role in the integrity and stability of the capsule. The polypeptide is PPE family protein PPE10 (PPE10) (Mycobacterium tuberculosis (strain CDC 1551 / Oshkosh)).